A 453-amino-acid polypeptide reads, in one-letter code: GTPase Der (453 aa).

2 EngA-type G domains span residues 3 to 178 (PKIA…PNNE) and 190 to 363 (LKLA…LECS). GTP-binding positions include 9 to 16 (GRPNVGKS), 57 to 61 (DTGGV), 130 to 133 (NKVD), 196 to 203 (GRPNAGKS), 243 to 247 (DTAGI), and 308 to 311 (NKTD). One can recognise a KH-like domain in the interval 364–448 (TRINTGVLNR…PIRIRLRSSH (85 aa)).

This sequence belongs to the TRAFAC class TrmE-Era-EngA-EngB-Septin-like GTPase superfamily. EngA (Der) GTPase family. In terms of assembly, associates with the 50S ribosomal subunit.

Its function is as follows. GTPase that plays an essential role in the late steps of ribosome biogenesis. The polypeptide is GTPase Der (Lawsonia intracellularis (strain PHE/MN1-00)).